Reading from the N-terminus, the 232-residue chain is MNRKASVSKELNAKHSKILEALLKHPDNRECADCRSKAPRWASVNLGIFICMQCSGIHRSLGVHISQVRSITLDTWLPDQVAFMKSTGNAKGNEYWESELPQHFERSSSDTFIRAKYSEKRWVSPGAIQPAPIVSQLSCKVSHLVESGYKPETPKKARTLSLDEEILLHHVLQVTPPETRTRAGSVDMKENVYVVPLPEFKKPNQKNENFSSEVNQNRRTTIAPPSSWATFD.

The region spanning 16–130 (SKILEALLKH…RWVSPGAIQP (115 aa)) is the Arf-GAP domain. The C4-type zinc finger occupies 31-54 (CADCRSKAPRWASVNLGIFICMQC). A disordered region spans residues 203–232 (PNQKNENFSSEVNQNRRTTIAPPSSWATFD). Residues 206–232 (KNENFSSEVNQNRRTTIAPPSSWATFD) are compositionally biased toward polar residues.

Its function is as follows. GTPase-activating protein (GAP) for ADP ribosylation factor (ARF). This is Probable ADP-ribosylation factor GTPase-activating protein AGD15 (AGD15) from Arabidopsis thaliana (Mouse-ear cress).